We begin with the raw amino-acid sequence, 154 residues long: Aspartate carbamoyltransferase regulatory chain (154 aa).

Residues cysteine 109, cysteine 114, cysteine 138, and cysteine 141 each coordinate Zn(2+).

The protein belongs to the PyrI family. As to quaternary structure, contains catalytic and regulatory chains. Zn(2+) is required as a cofactor.

Functionally, involved in allosteric regulation of aspartate carbamoyltransferase. This chain is Aspartate carbamoyltransferase regulatory chain, found in Photobacterium profundum (strain SS9).